Consider the following 162-residue polypeptide: Putative pre-16S rRNA nuclease (162 aa).

This sequence belongs to the YqgF nuclease family.

It localises to the cytoplasm. Its function is as follows. Could be a nuclease involved in processing of the 5'-end of pre-16S rRNA. In Brucella melitensis biotype 2 (strain ATCC 23457), this protein is Putative pre-16S rRNA nuclease.